The primary structure comprises 796 residues: MNQTASVSHHIKCQPSKTIKELGSNSPPQRNWKGIAIALLVILVVCSLITMSVILLTPDELTNSSETRLSLEELLGKGFGLHNPEARWINDTDVVYKTDNGHVMKLNAETNATTLLLDNSTFVTFKASRHSLSPDLKYVLLAYDVKQIFHYSFTASYLIYNIHTGEVWELNPPEVEDSVLQYAAWGVQGQQLIYIFENNIYYQPDIKSSSLRLTSSGKEGIVFNGIADWLYEEELLHSHIAHWWSPDGERLAFLMINDSLVPNMVIPRFTGALYPKAKQYPYPKAGQANPSVKLYVVNLYGPTHTLELMPPDIFKSREYYITMVKWVSNTRTVVRWLNRPQNISILTVCESTTGACSRKYEMTSDTWISKQNEEPVFSRDGSKFFMTVPVKQGGRGEFHHIAMFLVQSKSEQITVRHLTSGNWEVIRILAYDETTQKIYFLSTEFSPRGRQLYSASTEGLLSRDCISCNFRKEDCTYFDASFSPMNQHFLLFCEGPKVPMVSLHSTDNPSNYYILERNSMMKETIQKKKLAKREIRILHIDDYELPLQLSFPKDFLEKNQYALLLIIDEEPGGQMVTEKFHVDWDSVLIDTDNVIVARFDGRGSGFQGLKVLQEIHRRTGSVEAKDQIAAIKYLLKQPYIDSKRLSIFGKGYGGYIASMILKSDEKFFKCGTVVAPISDMKLYASAFSERYLGMPSKEESTYQASSVLHNIHGLKEENLLIIHGTADTKVHFQHSAELIKHLIKAGVNYTLQVYPDEGYHISDKSKHHFYSTILRFFSDCLKEEVSVLPQEPEEDE.

Over 1 to 34 (MNQTASVSHHIKCQPSKTIKELGSNSPPQRNWKG) the chain is Cytoplasmic. Residues 1-55 (MNQTASVSHHIKCQPSKTIKELGSNSPPQRNWKGIAIALLVILVVCSLITMSVIL) are mediates effects on KCND2. The chain crosses the membrane as a helical; Signal-anchor for type II membrane protein span at residues 35–55 (IAIALLVILVVCSLITMSVIL). Residues 56–796 (LTPDELTNSS…VLPQEPEEDE (741 aa)) are Extracellular-facing. N-linked (GlcNAc...) asparagine glycans are attached at residues N63, N90, N111, and N119. Phosphotyrosine is present on residues Y138 and Y143. Residues N257, N342, and N748 are each glycosylated (N-linked (GlcNAc...) asparagine).

The protein belongs to the peptidase S9B family. DPPIV subfamily. May form oligomers. Interacts with KCND1. Interacts with KCND2. Identified in a complex with KCND2 and KCNIP3. N-glycosylation is important for cell surface expression, specially at Asn-257, which is crucial. In terms of tissue distribution, detected in brain cortex, hippocampus, thalamus and cerebellum Purkinje cells (at protein level).

It localises to the cell membrane. Functionally, promotes cell surface expression of the potassium channel KCND2. Modulates the activity and gating characteristics of the potassium channel KCND2. Has no dipeptidyl aminopeptidase activity. The chain is Inactive dipeptidyl peptidase 10 (Dpp10) from Rattus norvegicus (Rat).